Consider the following 131-residue polypeptide: MADVVVGKDKGGEQRLISLPLSRIRVIMKSSPEVSSINQEALVLTAKATELFVQCLATYSYRHGSGKEKKVLTYSDLANTAQQSETFQFLADILPKKILASKYLKMLKEEKREEDEENDNDNESDHDEADS.

Ala2 carries the post-translational modification N-acetylalanine. Residues 100-124 (ASKYLKMLKEEKREEDEENDNDNES) adopt a coiled-coil conformation. Lys102 is modified (N6-acetyllysine). Positions 109 to 131 (EEKREEDEENDNDNESDHDEADS) are disordered. The segment covering 112–131 (REEDEENDNDNESDHDEADS) has biased composition (acidic residues). Ser124 is modified (phosphoserine).

In terms of assembly, heterodimer with POLE3; binds to DNA. Component of the CHRAC ISWI chromatin remodeling complex at least composed of SMARCA5/SNF2H, BAZ1A/ACF1, CHRAC1 and POLE3; the complex preferentially binds DNA through the CHRAC1-POLE3 heterodimer and possesses ATP-dependent nucleosome-remodeling activity. Within the complex, the heterodimer with POLE3 interacts with SMARCA5/SNF2H; the interaction is direct and enhances nucleosome sliding activity by the SMARCA5/SNF2H and BAZ1A/ACF1 interaction. Within the complex, the heterodimer with POLE3 interacts with BAZ1A/ACF1; the interactions are direct. In terms of tissue distribution, expressed in heart, brain, placenta, lung, liver, skeletal muscle, kidney and pancreas.

It localises to the nucleus. Its function is as follows. Forms a complex with DNA polymerase epsilon subunit POLE3 and binds naked DNA, which is then incorporated into chromatin, aided by the nucleosome remodeling activity of ISWI/SNF2H and ACF1. Does not enhance nucleosome sliding activity of the ACF-5 ISWI chromatin remodeling complex. The chain is Chromatin accessibility complex protein 1 (CHRAC1) from Homo sapiens (Human).